Consider the following 726-residue polypeptide: X-ray repair cross-complementing protein 5 (726 aa).

One can recognise a VWFA domain in the interval alanine 8–leucine 160. The tract at residues leucine 137–leucine 164 is leucine-zipper. Residues glycine 175–serine 186 are compositionally biased toward low complexity. The interval glycine 175 to aspartate 198 is disordered. Residues glycine 253–glutamine 449 form the Ku domain. The short motif at glutamate 714–leucine 722 is the EEXXXDL motif element.

The protein belongs to the ku80 family. Heterodimer composed of xrcc5/Ku80 and xrcc6/Ku70. Ubiquitinated via 'Lys-48'-linked polyubiquitination at DNA double strand break sites (DSBs), leading to its release from DSBs and subsequent proteasomal degradation. Polyubiquitination is not required for completion of NHEJ. As to expression, expressed at high levels in oocyte and testis.

Its subcellular location is the nucleus. Its function is as follows. Single-stranded DNA-dependent ATP-dependent helicase that plays a key role in DNA non-homologous end joining (NHEJ). The protein is X-ray repair cross-complementing protein 5 of Xenopus laevis (African clawed frog).